The sequence spans 243 residues: DNA repair protein RecO (243 aa).

The protein belongs to the RecO family.

Functionally, involved in DNA repair and RecF pathway recombination. The chain is DNA repair protein RecO from Bartonella quintana (strain Toulouse) (Rochalimaea quintana).